The chain runs to 98 residues: Class II hydrophobin 5 (98 aa).

The first 17 residues, 1–17 (MQFSLALVTLLATAVSA), serve as a signal peptide directing secretion. 4 disulfide bridges follow: cysteine 30–cysteine 78, cysteine 39–cysteine 69, cysteine 40–cysteine 52, and cysteine 79–cysteine 90.

Belongs to the cerato-ulmin hydrophobin family.

The protein localises to the secreted. It localises to the cell wall. Functionally, aerial growth, conidiation, and dispersal of filamentous fungi in the environment rely upon a capability of their secreting small amphipathic proteins called hydrophobins (HPBs) with low sequence identity. Class I can self-assemble into an outermost layer of rodlet bundles on aerial cell surfaces, conferring cellular hydrophobicity that supports fungal growth, development and dispersal; whereas Class II form highly ordered films at water-air interfaces through intermolecular interactions but contribute nothing to the rodlet structure. Does not seem to be important for the ability to cause seedling disease. This chain is Class II hydrophobin 5, found in Gibberella moniliformis (Maize ear and stalk rot fungus).